The primary structure comprises 468 residues: Lysosomal dipeptide transporter MFSD1 (468 aa).

Residues 1 to 25 (MEDEEEEARALLPGGSDEAGRETRA) are disordered. The Dileucine internalization motif signature appears at 11-12 (LL). 12 helical membrane-spanning segments follow: residues 42 to 62 (LAHR…SYFC), 86 to 106 (LLYA…GFLI), 116 to 136 (TIIF…GGIF), 138 to 158 (AFWL…SLAV), 173 to 194 (LNLV…NMNL), 218 to 238 (LMIG…LAYL), 270 to 290 (WLIF…IGLV), 307 to 327 (AINS…GLLV), 334 to 354 (IIWV…LAFT), 364 to 384 (LLGL…AFVV), 395 to 415 (FMQS…GMIL), and 421 to 441 (LFLE…VVLL).

It belongs to the major facilitator superfamily. Homodimer. Interacts with lysosomal protein GLMP (via lumenal domain); the interaction starts while both proteins are still in the endoplasmic reticulum and is required for stabilization of MFSD1 in lysosomes but has no direct effect on its targeting to lysosomes or transporter activity.

It localises to the lysosome membrane. It catalyses the reaction L-alpha-aminoacyl-L-arginine(out) = L-alpha-aminoacyl-L-arginine(in). The catalysed reaction is L-arginyl-L-alpha-amino acid(out) = L-arginyl-L-alpha-amino acid(in). The enzyme catalyses L-arginyl-glycine(out) = L-arginyl-glycine(in). It carries out the reaction L-alpha-aminoacyl-L-lysine(out) = L-alpha-aminoacyl-L-lysine(in). It catalyses the reaction L-aspartyl-L-lysine(out) = L-aspartyl-L-lysine(in). The catalysed reaction is L-alanyl-L-lysine(out) = L-alanyl-L-lysine(in). The enzyme catalyses L-lysyl-L-alpha-amino acid(out) = L-lysyl-L-alpha-amino acid(in). It carries out the reaction L-lysyl-L-alanine(out) = L-lysyl-L-alanine(in). It catalyses the reaction L-lysyl-L-lysine(out) = L-lysyl-L-lysine(in). The catalysed reaction is L-lysyl-glycine(out) = L-lysyl-glycine(in). The enzyme catalyses L-alpha-aminoacyl-L-histidine(out) = L-alpha-aminoacyl-L-histidine(in). It carries out the reaction L-histidyl-L-alpha-amino acid(out) = L-histidyl-L-alpha-amino acid(in). It catalyses the reaction L-histidyl-glycine(out) = L-histidyl-glycine(in). In terms of biological role, lysosomal dipeptide uniporter that selectively exports lysine, arginine or histidine-containing dipeptides with a net positive charge from the lysosome lumen into the cytosol. Could play a role in a specific type of protein O-glycosylation indirectly regulating macrophages migration and tissue invasion. Also essential for liver homeostasis. The protein is Lysosomal dipeptide transporter MFSD1 of Bos taurus (Bovine).